The following is a 227-amino-acid chain: Cytochrome c oxidase subunit 2 (227 aa).

The Mitochondrial intermembrane portion of the chain corresponds to 1–14 (MAHPVQLSLQDATS). The helical transmembrane segment at 15–45 (PIMEELITFHDHAFMAMSLISFLVLYALALT) threads the bilayer. At 46–59 (LTTKLTNTNITDAQ) the chain is on the mitochondrial matrix side. Residues 60–87 (EMETIWTILPAVILILIALPSLRVLYLT) form a helical membrane-spanning segment. At 88–227 (DEVNDPSLTI…IFEMGPVFTL (140 aa)) the chain is on the mitochondrial intermembrane side. 6 residues coordinate Cu cation: histidine 161, cysteine 196, glutamate 198, cysteine 200, histidine 204, and methionine 207. Glutamate 198 is a binding site for Mg(2+).

Belongs to the cytochrome c oxidase subunit 2 family. Component of the cytochrome c oxidase (complex IV, CIV), a multisubunit enzyme composed of 14 subunits. The complex is composed of a catalytic core of 3 subunits MT-CO1, MT-CO2 and MT-CO3, encoded in the mitochondrial DNA, and 11 supernumerary subunits COX4I, COX5A, COX5B, COX6A, COX6B, COX6C, COX7A, COX7B, COX7C, COX8 and NDUFA4, which are encoded in the nuclear genome. The complex exists as a monomer or a dimer and forms supercomplexes (SCs) in the inner mitochondrial membrane with NADH-ubiquinone oxidoreductase (complex I, CI) and ubiquinol-cytochrome c oxidoreductase (cytochrome b-c1 complex, complex III, CIII), resulting in different assemblies (supercomplex SCI(1)III(2)IV(1) and megacomplex MCI(2)III(2)IV(2)). Found in a complex with TMEM177, COA6, COX18, COX20, SCO1 and SCO2. Interacts with TMEM177 in a COX20-dependent manner. Interacts with COX20. Interacts with COX16. Requires Cu cation as cofactor.

Its subcellular location is the mitochondrion inner membrane. The catalysed reaction is 4 Fe(II)-[cytochrome c] + O2 + 8 H(+)(in) = 4 Fe(III)-[cytochrome c] + 2 H2O + 4 H(+)(out). Component of the cytochrome c oxidase, the last enzyme in the mitochondrial electron transport chain which drives oxidative phosphorylation. The respiratory chain contains 3 multisubunit complexes succinate dehydrogenase (complex II, CII), ubiquinol-cytochrome c oxidoreductase (cytochrome b-c1 complex, complex III, CIII) and cytochrome c oxidase (complex IV, CIV), that cooperate to transfer electrons derived from NADH and succinate to molecular oxygen, creating an electrochemical gradient over the inner membrane that drives transmembrane transport and the ATP synthase. Cytochrome c oxidase is the component of the respiratory chain that catalyzes the reduction of oxygen to water. Electrons originating from reduced cytochrome c in the intermembrane space (IMS) are transferred via the dinuclear copper A center (CU(A)) of subunit 2 and heme A of subunit 1 to the active site in subunit 1, a binuclear center (BNC) formed by heme A3 and copper B (CU(B)). The BNC reduces molecular oxygen to 2 water molecules using 4 electrons from cytochrome c in the IMS and 4 protons from the mitochondrial matrix. The chain is Cytochrome c oxidase subunit 2 (MT-CO2) from Macaca fascicularis (Crab-eating macaque).